The following is a 472-amino-acid chain: Uronate isomerase (472 aa).

Belongs to the metallo-dependent hydrolases superfamily. Uronate isomerase family.

The enzyme catalyses D-glucuronate = D-fructuronate. The catalysed reaction is aldehydo-D-galacturonate = keto-D-tagaturonate. Its pathway is carbohydrate metabolism; pentose and glucuronate interconversion. This Opitutus terrae (strain DSM 11246 / JCM 15787 / PB90-1) protein is Uronate isomerase.